Here is a 236-residue protein sequence, read N- to C-terminus: Small ribosomal subunit protein uS2c (236 aa).

It belongs to the universal ribosomal protein uS2 family.

The protein resides in the plastid. The protein localises to the chloroplast. This is Small ribosomal subunit protein uS2c (rps2) from Zea mays (Maize).